The chain runs to 257 residues: Protein orai-2 (257 aa).

4 helical membrane passes run 62-79, 94-114, 156-176, and 201-221; these read ASSR…VAMV, LIAF…ALLI, LGIL…FLPI, and LVST…TIHF.

This sequence belongs to the Orai family.

It is found in the membrane. Functionally, ca(2+) release-activated Ca(2+)-like (CRAC-like) channel subunit which mediates Ca(2+) influx and increase in Ca(2+)-selective current by synergy with the Ca(2+) sensor, stim1. The chain is Protein orai-2 (orai2) from Xenopus laevis (African clawed frog).